A 645-amino-acid polypeptide reads, in one-letter code: 1-deoxy-D-xylulose-5-phosphate synthase (645 aa).

Residues H87 and G128–S130 each bind thiamine diphosphate. D159 contributes to the Mg(2+) binding site. Thiamine diphosphate contacts are provided by residues G160–A161, N188, F295, and E384. N188 serves as a coordination point for Mg(2+).

Belongs to the transketolase family. DXPS subfamily. Homodimer. Mg(2+) is required as a cofactor. The cofactor is thiamine diphosphate.

The enzyme catalyses D-glyceraldehyde 3-phosphate + pyruvate + H(+) = 1-deoxy-D-xylulose 5-phosphate + CO2. Its pathway is metabolic intermediate biosynthesis; 1-deoxy-D-xylulose 5-phosphate biosynthesis; 1-deoxy-D-xylulose 5-phosphate from D-glyceraldehyde 3-phosphate and pyruvate: step 1/1. Functionally, catalyzes the acyloin condensation reaction between C atoms 2 and 3 of pyruvate and glyceraldehyde 3-phosphate to yield 1-deoxy-D-xylulose-5-phosphate (DXP). The sequence is that of 1-deoxy-D-xylulose-5-phosphate synthase from Alcanivorax borkumensis (strain ATCC 700651 / DSM 11573 / NCIMB 13689 / SK2).